The chain runs to 195 residues: dTTP/UTP pyrophosphatase (195 aa).

Asp70 acts as the Proton acceptor in catalysis.

The protein belongs to the Maf family. YhdE subfamily. A divalent metal cation serves as cofactor.

The protein localises to the cytoplasm. It carries out the reaction dTTP + H2O = dTMP + diphosphate + H(+). It catalyses the reaction UTP + H2O = UMP + diphosphate + H(+). Nucleoside triphosphate pyrophosphatase that hydrolyzes dTTP and UTP. May have a dual role in cell division arrest and in preventing the incorporation of modified nucleotides into cellular nucleic acids. The sequence is that of dTTP/UTP pyrophosphatase from Methanococcoides burtonii (strain DSM 6242 / NBRC 107633 / OCM 468 / ACE-M).